The sequence spans 348 residues: Putative [LysW]-L-2-aminoadipate/[LysW]-L-glutamate phosphate reductase (348 aa).

Residue 9 to 12 coordinates NADP(+); it reads SGYV. Cysteine 149 is an active-site residue. Asparagine 315 is an NADP(+) binding site.

It belongs to the NAGSA dehydrogenase family. Type 1 subfamily. LysY sub-subfamily.

Its subcellular location is the cytoplasm. The catalysed reaction is [amino-group carrier protein]-C-terminal-N-(1-carboxy-5-oxopentan-1-yl)-L-glutamine + phosphate + NADP(+) = [amino-group carrier protein]-C-terminal-N-(1-carboxy-5-phosphooxy-5-oxopentan-1-yl)-L-glutamine + NADPH + H(+). The enzyme catalyses [amino-group carrier protein]-C-terminal-gamma-(L-glutamyl-5-semialdehyde)-L-glutamate + phosphate + NADP(+) = [amino-group carrier protein]-C-terminal-gamma-(5-phospho-L-glutamyl)-L-glutamate + NADPH + H(+). It participates in amino-acid biosynthesis; L-lysine biosynthesis via AAA pathway; L-lysine from L-alpha-aminoadipate (Thermus route): step 3/5. Its pathway is amino-acid biosynthesis; L-arginine biosynthesis. In terms of biological role, involved in both the arginine and lysine biosynthetic pathways. This chain is Putative [LysW]-L-2-aminoadipate/[LysW]-L-glutamate phosphate reductase, found in Cenarchaeum symbiosum (strain A).